We begin with the raw amino-acid sequence, 279 residues long: Biotin synthase (279 aa).

The 227-residue stretch at 2–228 (KTIMLCAISS…NARIMIAGGR (227 aa)) folds into the Radical SAM core domain. [4Fe-4S] cluster is bound by residues Cys17, Cys21, and Cys24. [2Fe-2S] cluster is bound by residues Cys61, Cys96, Cys154, and Arg221.

The protein belongs to the radical SAM superfamily. Biotin synthase family. In terms of assembly, homodimer. Requires [4Fe-4S] cluster as cofactor. It depends on [2Fe-2S] cluster as a cofactor.

It carries out the reaction (4R,5S)-dethiobiotin + (sulfur carrier)-SH + 2 reduced [2Fe-2S]-[ferredoxin] + 2 S-adenosyl-L-methionine = (sulfur carrier)-H + biotin + 2 5'-deoxyadenosine + 2 L-methionine + 2 oxidized [2Fe-2S]-[ferredoxin]. It functions in the pathway cofactor biosynthesis; biotin biosynthesis; biotin from 7,8-diaminononanoate: step 2/2. In terms of biological role, catalyzes the conversion of dethiobiotin (DTB) to biotin by the insertion of a sulfur atom into dethiobiotin via a radical-based mechanism. This is Biotin synthase from Campylobacter curvus (strain 525.92).